We begin with the raw amino-acid sequence, 249 residues long: Small ribosomal subunit protein uS3 (249 aa).

Residues I39–P108 enclose the KH type-2 domain. The tract at residues E214 to E249 is disordered. Over residues Q220–P235 the composition is skewed to basic and acidic residues. The span at A236 to E249 shows a compositional bias: basic residues.

The protein belongs to the universal ribosomal protein uS3 family. As to quaternary structure, part of the 30S ribosomal subunit. Forms a tight complex with proteins S10 and S14.

In terms of biological role, binds the lower part of the 30S subunit head. Binds mRNA in the 70S ribosome, positioning it for translation. The sequence is that of Small ribosomal subunit protein uS3 from Deinococcus radiodurans (strain ATCC 13939 / DSM 20539 / JCM 16871 / CCUG 27074 / LMG 4051 / NBRC 15346 / NCIMB 9279 / VKM B-1422 / R1).